Consider the following 263-residue polypeptide: Phosphate import ATP-binding protein PstB (263 aa).

An ABC transporter domain is found at 17–258 (IDVRDLNFYY…PRRKETEDYI (242 aa)). 49 to 56 (GPSGCGKS) serves as a coordination point for ATP.

Belongs to the ABC transporter superfamily. Phosphate importer (TC 3.A.1.7) family. The complex is composed of two ATP-binding proteins (PstB), two transmembrane proteins (PstC and PstA) and a solute-binding protein (PstS).

It localises to the cell inner membrane. It carries out the reaction phosphate(out) + ATP + H2O = ADP + 2 phosphate(in) + H(+). Part of the ABC transporter complex PstSACB involved in phosphate import. Responsible for energy coupling to the transport system. This is Phosphate import ATP-binding protein PstB from Ralstonia nicotianae (strain ATCC BAA-1114 / GMI1000) (Ralstonia solanacearum).